A 456-amino-acid chain; its full sequence is Keratin, type I cuticular Ha8 (456 aa).

Residues 1–104 are head; sequence MTSSYSSSSC…YGENTLNGHE (104 aa). In terms of domain architecture, IF rod spans 104–415; the sequence is EKETMQFLND…NLLESEDCKL (312 aa). A coil 1A region spans residues 105–139; that stretch reads KETMQFLNDRLANYLEKVRQLEQENAELEATLLER. Residues 140 to 150 form a linker 1 region; that stretch reads SKCHESTVCPD. Residues 151 to 251 are coil 1B; that stretch reads YQSYFHTIEE…HEQEVKILRS (101 aa). The segment at 252–267 is linker 12; the sequence is QLGEKLRIELDIEPTI. Positions 268–411 are coil 2; that stretch reads DLNRVLGEMR…ATYRNLLESE (144 aa). The segment at 412-456 is tail; it reads DCKLPCNPCSTSPSCVTAPCAPRPSCGPCTTCGPTCGASTTGSRF.

The protein belongs to the intermediate filament family.

The protein is Keratin, type I cuticular Ha8 (KRT38) of Homo sapiens (Human).